We begin with the raw amino-acid sequence, 247 residues long: Uridylate kinase (247 aa).

14 to 17 (KLSG) contacts ATP. An involved in allosteric activation by GTP region spans residues 22–27 (GERGVG). UMP is bound at residue Gly-56. ATP contacts are provided by Gly-57 and Arg-61. UMP is bound by residues Asp-76 and 137-144 (IGSPYFST). The ATP site is built by Asn-165, Tyr-171, and Asp-174.

This sequence belongs to the UMP kinase family. Homohexamer.

It is found in the cytoplasm. The catalysed reaction is UMP + ATP = UDP + ADP. The protein operates within pyrimidine metabolism; CTP biosynthesis via de novo pathway; UDP from UMP (UMPK route): step 1/1. Its activity is regulated as follows. Allosterically activated by GTP. Inhibited by UTP, 5-bromo-UTP and 5-iodo-UTP. Its function is as follows. Catalyzes the reversible phosphorylation of UMP to UDP, with ATP as the most efficient phosphate donor. This Streptococcus pneumoniae serotype 4 (strain ATCC BAA-334 / TIGR4) protein is Uridylate kinase (pyrH).